The following is a 413-amino-acid chain: uncharacterized protein (413 aa).

It belongs to the mycobacterial PPE family.

This is an uncharacterized protein from Mycobacterium tuberculosis (strain CDC 1551 / Oshkosh).